The sequence spans 200 residues: Transcription elongation factor A protein-like 6 (200 aa).

A disordered region spans residues 1-200; sequence MEKPYNKNEG…QRGLHDIPYL (200 aa). Over residues 20-36 the composition is skewed to acidic residues; that stretch reads DEVEPDDEGKSDEEEKP. Phosphoserine is present on Ser-30. Composition is skewed to basic and acidic residues over residues 37 to 52, 60 to 80, and 115 to 154; these read DAEG…KAEG, LEDK…KPQG, and DRGT…EELR. Ser-65 bears the Phosphoserine mark.

Belongs to the TFS-II family. TFA subfamily.

Its subcellular location is the nucleus. Its function is as follows. May be involved in transcriptional regulation. This is Transcription elongation factor A protein-like 6 (TCEAL6) from Homo sapiens (Human).